The primary structure comprises 221 residues: PKHD-type hydroxylase P9215_13741 (221 aa).

One can recognise a Fe2OG dioxygenase domain in the interval arginine 80–serine 174. 3 residues coordinate Fe cation: histidine 98, aspartate 100, and histidine 155. Arginine 165 lines the 2-oxoglutarate pocket.

Fe(2+) is required as a cofactor. The cofactor is L-ascorbate.

The sequence is that of PKHD-type hydroxylase P9215_13741 from Prochlorococcus marinus (strain MIT 9215).